Consider the following 381-residue polypeptide: uncharacterized protein (381 aa).

It belongs to the glycerate kinase type-1 family.

This is an uncharacterized protein from Mycobacterium tuberculosis (strain CDC 1551 / Oshkosh).